The primary structure comprises 393 residues: MAKEAYKREKPHVNIGTIGHVDHGKTTLTAAITTVLAKKGMAQLREFGDIDKAPEERERGITISTAHVEYETDKRHYAHIDCPGHADYIKNMITGAAQMDGAILVVAGTDGPMPQTREHILLARQVNVPALVVFLNKVDIADPELIELVELELRELLSEYEFPGDDIPIIKGSALKALDGDPESEAAIMELMDAVDSYIPEPVRDVDKPFLMPIEDVFSISGRGTVGTGRIESGVIKIGEEVEIVGIKPTRKSVVTGIEMFQKTLDQGQAGDNAGILFRGVDKEELERGMVIAKPGTITPHTKFKAEVYILKKEEGGRHTPFFNNYRPQFYFRTTDVTGAVTLPEGVEMVMPGDNLSVEVELIVPIAMDENLRFAIREGGRTVGAGTVTQIIE.

The tr-type G domain occupies 10–203 (KPHVNIGTIG…AVDSYIPEPV (194 aa)). The segment at 19-26 (GHVDHGKT) is G1. 19–26 (GHVDHGKT) contributes to the GTP binding site. Mg(2+) is bound at residue threonine 26. The segment at 60-64 (GITIS) is G2. The G3 stretch occupies residues 81–84 (DCPG). Residues 81-85 (DCPGH) and 136-139 (NKVD) each bind GTP. The G4 stretch occupies residues 136–139 (NKVD). Positions 173-175 (SAL) are G5.

The protein belongs to the TRAFAC class translation factor GTPase superfamily. Classic translation factor GTPase family. EF-Tu/EF-1A subfamily. As to quaternary structure, monomer.

It is found in the cytoplasm. The catalysed reaction is GTP + H2O = GDP + phosphate + H(+). Functionally, GTP hydrolase that promotes the GTP-dependent binding of aminoacyl-tRNA to the A-site of ribosomes during protein biosynthesis. The protein is Elongation factor Tu of Prosthecochloris aestuarii (strain DSM 271 / SK 413).